The sequence spans 402 residues: Speedy protein E2B (402 aa).

Residues 1-89 (MDRTETRFRK…EEPEKELAPE (89 aa)) form a disordered region. Residues 16–39 (GKITTSRQPHPQNEQSPQRSTSGY) are compositionally biased toward polar residues. The segment covering 76 to 89 (DESEEEPEKELAPE) has biased composition (acidic residues).

It belongs to the Speedy/Ringo family.

The protein is Speedy protein E2B (SPDYE2B) of Homo sapiens (Human).